Reading from the N-terminus, the 99-residue chain is uncharacterized protein (99 aa).

Residues 3 to 68 are a coiled coil; the sequence is ERLKAITNLL…EKFDSNRKFY (66 aa).

This is an uncharacterized protein from Aquifex aeolicus (strain VF5).